The primary structure comprises 1007 residues: Glutamate receptor ionotropic, delta-2 (1007 aa).

An N-terminal signal peptide occupies residues 1 to 23; the sequence is MEVFPLLLFLSFCWSRTWDLATA. The interaction with CBLN1 homotrimer stretch occupies residues 24 to 345; the sequence is DSIIHIGAIF…NAFHKKLEDR (322 aa). The Extracellular portion of the chain corresponds to 24–566; sequence DSIIHIGAIF…DMFACLAPFD (543 aa). Disulfide bonds link Cys83–Cys355, Cys99–Cys131, and Cys298–Cys310. Asn293 is a glycosylation site (N-linked (GlcNAc...) asparagine). Residue Asn426 is glycosylated (N-linked (GlcNAc...) asparagine). Positions 531, 534, and 535 each coordinate Ca(2+). Residues 567–587 traverse the membrane as a helical segment; that stretch reads LSLWACIAGTVLLVGLLVYLL. Over 588–635 the chain is Cytoplasmic; the sequence is NWLNPPRLQMGSMTSTTLYNSMWFVYGSFVQQGGEVPYTTLATRMMMG. A helical transmembrane segment spans residues 636 to 656; it reads AWWLFALIVISSYTANLAAFL. The Extracellular portion of the chain corresponds to 657 to 830; the sequence is TITRIESSIQ…QKGGALDIKS (174 aa). N-linked (GlcNAc...) asparagine glycans are attached at residues Asn713 and Asn716. Residues Asp753, Asp755, and Ser757 each coordinate Ca(2+). The helical transmembrane segment at 831–851 threads the bilayer; it reads LAGVFCILAAGIVLSCLIAVL. Residues 852 to 1007 lie on the Cytoplasmic side of the membrane; sequence ETWWSRRKGS…GNDPDRGTSI (156 aa). Ser883 is subject to Phosphoserine. The residue at position 886 (Thr886) is a Phosphothreonine. The residue at position 890 (Ser890) is a Phosphoserine. The interaction with AP4M1 stretch occupies residues 921 to 991; the sequence is DFRNTHITTT…MSSIPYQPTP (71 aa). A PDZ-binding motif is present at residues 1005–1007; that stretch reads TSI. Ser1006 bears the Phosphoserine mark.

Belongs to the glutamate-gated ion channel (TC 1.A.10.1) family. GRID2 subfamily. Tetramer; dimer of dimers. Interacts with EML2, MAGI2 (via PDZ domains) and AP4M1. Interacts with BECN1, GOPC, GRID2IP, SHANK1 and SHANK2. Interacts with CBLN2, but not with CBLN4. Interacts with CBLN1 (via C1q domain); the interaction is CBLN1-NRX1 complex formation-dependent; CBLN1-binding is calcium-independent; CBLN1 hexamers anchor GRID2 N-terminal domain dimers to monomeric NRXN1 isoform beta; promotes synaptogenesis and mediates the D-Serine-dependent long term depression signals and AMPA receptor endocytosis. In terms of tissue distribution, expressed selectively in cerebellar Purkinje cells where it is localized in dendritic spines.

The protein localises to the postsynaptic cell membrane. The catalysed reaction is Ca(2+)(in) = Ca(2+)(out). The enzyme catalyses Na(+)(in) = Na(+)(out). Its function is as follows. Member of the ionotropic glutamate receptor family, which plays a crucial role in synaptic organization and signal transduction in the central nervous system. Although it shares structural features with ionotropic glutamate receptors, does not bind glutamate as a primary ligand. Promotes synaptogenesis and mediates the D-Serine-dependent long term depression signals and AMPA receptor endocytosis of cerebellar parallel fiber-Purkinje cell (PF-PC) synapses through the NRX1B-CBLN1-GRID2 triad complex. In the presence of neurexins and cerebellins, forms cation-selective channels that are proposed to be gated by glycine and D-serine. However, recent research disputes this ligand-gated cation channel activity. Cation-selective ion channel activity can be triggered by GRM1 in Purkinje cells. This chain is Glutamate receptor ionotropic, delta-2 (Grid2), found in Mus musculus (Mouse).